The following is a 3914-amino-acid chain: Trichosetin synthetase PKS-NRPS1 (3914 aa).

The region spanning 4-420 is the Ketosynthase family 3 (KS3) domain; that stretch reads NEPIAIIGSA…GTNAHAIIEA (417 aa). Active-site for beta-ketoacyl synthase activity residues include Cys-177, His-301, and His-340. A malonyl-CoA:ACP transacylase (MAT) domain region spans residues 525–847; the sequence is VLTGQGAQWP…REKDDIQQFA (323 aa). The interval 913 to 1047 is N-terminal hotdog fold; the sequence is HPILGRRCHD…AHVKASLSVP (135 aa). Residues 913–1214 are dehydratase (DH) domain; sequence HPILGRRCHD…MELVPFSPAT (302 aa). The region spanning 913 to 1216 is the PKS/mFAS DH domain; sequence HPILGRRCHD…LVPFSPATPE (304 aa). His-946 functions as the Proton acceptor; for dehydratase activity in the catalytic mechanism. The interval 1062 to 1216 is C-terminal hotdog fold; that stretch reads LRKVEVDRFY…LVPFSPATPE (155 aa). Asp-1122 serves as the catalytic Proton donor; for dehydratase activity. A methyltransferase (MT) domain region spans residues 1364–1593; sequence EGFGLDLVNK…DLPETKSTEL (230 aa). Residues 2083 to 2255 form a ketoreductase (KR) domain region; that stretch reads TFLLIGLSGE…VAASSIDISS (173 aa). Residues 2356–2436 enclose the Carrier 1 domain; sequence LADVKTKADA…DLIEESLNLI (81 aa). Residue Ser-2396 is modified to O-(pantetheine 4'-phosphoryl)serine. The segment at 2447-2518 is disordered; that stretch reads EAGSTPTTQP…DSTDNSTPLK (72 aa). Residues 2481-2500 are compositionally biased toward polar residues; the sequence is QQTGSDSSRSPIDTPLTSME. The interval 2529-2956 is condensation (C) domain; it reads SYGQAGFWFL…VQGTNKAADT (428 aa). Residues 2991 to 3388 are adenylation (A) (KR) domain; sequence QTIQANSTKV…LLFCDGRLED (398 aa). One can recognise a Carrier 2 domain in the interval 3502-3579; it reads GTLTVAEQRL…TMAVVLESCG (78 aa). Ser-3539 carries the post-translational modification O-(pantetheine 4'-phosphoryl)serine. The segment at 3615–3831 is reductase (RED) domain; that stretch reads LTGSAGYLGR…VLPTGDIVKA (217 aa).

It in the C-terminal section; belongs to the NRP synthetase family.

The enzyme catalyses L-serine + 7 malonyl-CoA + acetyl-CoA + 2 S-adenosyl-L-methionine + ATP + 8 NADPH + 11 H(+) = (5S)-3-[(2E,6R,8E,10E,12E)-2,6-dimethyltetradeca-2,8,10,12-tetraenoyl]-5-(hydroxymethyl)pyrrolidine-2,4-dione + AMP + 2 S-adenosyl-L-homocysteine + 7 CO2 + diphosphate + 8 NADP(+) + 8 CoA + 6 H2O. The protein operates within mycotoxin biosynthesis. Hybrid PKS-NRPS synthetase; part of the gene cluster that mediates the biosynthesis of trichosetin, a trans-fused decalin-containing tetramic acid with antimicrobial activity. The PKS module of PKS-NRPS1 together with the enoylreductase (ER) catalyze the formation of the polyketide unit which is then conjugated to L-serine by the condensation domain of the PKS-NRPS1 NRPS module. Activity of the Dieckmann cyclase domain (RED) results in release of the Dieckmann product intermediate. Diels-Alderase (DA) is involved in endo-selective Diels-Alder cycloaddition to form the decalin ring, leading to the production of N-desmethylequisetin also called trichosetin. The cluster does not contain the equisetin N-methyltransferase and consequently, trichosetin is isolated as final product. This Gibberella fujikuroi (strain CBS 195.34 / IMI 58289 / NRRL A-6831) (Bakanae and foot rot disease fungus) protein is Trichosetin synthetase PKS-NRPS1.